The chain runs to 336 residues: Uroporphyrinogen decarboxylase (336 aa).

Residues 24-28 (RQVGR), Asp73, Tyr142, Ser197, and His312 each bind substrate.

The protein belongs to the uroporphyrinogen decarboxylase family. Homodimer.

It localises to the cytoplasm. It catalyses the reaction uroporphyrinogen III + 4 H(+) = coproporphyrinogen III + 4 CO2. The protein operates within porphyrin-containing compound metabolism; protoporphyrin-IX biosynthesis; coproporphyrinogen-III from 5-aminolevulinate: step 4/4. Functionally, catalyzes the decarboxylation of four acetate groups of uroporphyrinogen-III to yield coproporphyrinogen-III. The polypeptide is Uroporphyrinogen decarboxylase (Chlamydia trachomatis serovar L2 (strain ATCC VR-902B / DSM 19102 / 434/Bu)).